We begin with the raw amino-acid sequence, 133 residues long: ATP synthase epsilon chain, chloroplastic (133 aa).

This sequence belongs to the ATPase epsilon chain family. In terms of assembly, F-type ATPases have 2 components, CF(1) - the catalytic core - and CF(0) - the membrane proton channel. CF(1) has five subunits: alpha(3), beta(3), gamma(1), delta(1), epsilon(1). CF(0) has three main subunits: a, b and c.

Its subcellular location is the plastid. It is found in the chloroplast thylakoid membrane. In terms of biological role, produces ATP from ADP in the presence of a proton gradient across the membrane. This Lotus japonicus (Lotus corniculatus var. japonicus) protein is ATP synthase epsilon chain, chloroplastic.